Here is a 194-residue protein sequence, read N- to C-terminus: Probable nicotinate-nucleotide adenylyltransferase (194 aa).

It belongs to the NadD family.

The catalysed reaction is nicotinate beta-D-ribonucleotide + ATP + H(+) = deamido-NAD(+) + diphosphate. It functions in the pathway cofactor biosynthesis; NAD(+) biosynthesis; deamido-NAD(+) from nicotinate D-ribonucleotide: step 1/1. Catalyzes the reversible adenylation of nicotinate mononucleotide (NaMN) to nicotinic acid adenine dinucleotide (NaAD). This is Probable nicotinate-nucleotide adenylyltransferase from Brucella abortus (strain 2308).